The chain runs to 437 residues: UDP-glucuronate 4-epimerase 4 (437 aa).

A helical membrane pass occupies residues 30-50 (SLTKFAFFSFFLLCLISLLFL). Residues 56–76 (INPSSPSDPSRRSLRTNTYGG) form a disordered region. Residues 96–116 (GITVLVTGAAGFVGTHVSAAL) form a helical membrane-spanning segment. 98 to 129 (TVLVTGAAGFVGTHVSAALKRRGDGVIGLDNF) contacts NAD(+). The active-site Proton acceptor is Y248.

Belongs to the NAD(P)-dependent epimerase/dehydratase family. As to quaternary structure, homodimer. In roots, leaves, siliques, flowers, pollen and stems.

It localises to the golgi apparatus. It is found in the golgi stack membrane. It catalyses the reaction UDP-alpha-D-glucuronate = UDP-alpha-D-galacturonate. Its activity is regulated as follows. Activated by glycerol, not effected by dimethyl sulfoxide and inhibited by high concentration of monovalent salts, UDP-xylose, UDP-arabinose or UDP. In terms of biological role, involved in the synthesis of the negatively charged monosaccharide that forms the backbone of pectic cell wall components. In Arabidopsis thaliana (Mouse-ear cress), this protein is UDP-glucuronate 4-epimerase 4 (GAE4).